Consider the following 229-residue polypeptide: Vacuolar protein sorting-associated protein 24 homolog 1 (229 aa).

Residues 15–60 (KQLLRDWQRKLRQECRNIERQIRDIQKEERNVQKAIKEAAKRNDMV) adopt a coiled-coil conformation. The disordered stretch occupies residues 193-215 (VPAQKASTSREEEAVAEGVDDEE). Residues 206–215 (AVAEGVDDEE) show a composition bias toward acidic residues.

Belongs to the SNF7 family. In terms of assembly, component of the endosomal sorting required for transport complex III (ESCRT-III), composed at least of VPS2, VPS20, VPS24 and VPS32. Interacts with SKD1.

It is found in the endosome. Component of the ESCRT-III complex, which is required for multivesicular bodies (MVBs) formation and sorting of endosomal cargo proteins into MVBs. The ESCRT-III complex is probably involved in the concentration of MVB cargo. The protein is Vacuolar protein sorting-associated protein 24 homolog 1 (VPS24-1) of Arabidopsis thaliana (Mouse-ear cress).